A 443-amino-acid chain; its full sequence is Putative F-box/FBD/LRR-repeat protein At5g22670 (443 aa).

The 47-residue stretch at 10–56 (QDSISLLPDDLLCRILSNLPTKVAVRTSVLSKRWKRFSLSVPLLEFN) folds into the F-box domain. LRR repeat units lie at residues 139–165 (SLRL…HLID), 166–191 (NIYP…NVSR), 219–243 (YGDI…SLRD), 275–300 (NFLL…TMSG), and 325–353 (YAVF…VLEL). The region spanning 361–412 (LLILSSSIPKCLRSSLEHVEIHTPISGAEAEMKLVKYFLENSAVLKKFTLQL) is the FBD domain.

The protein is Putative F-box/FBD/LRR-repeat protein At5g22670 of Arabidopsis thaliana (Mouse-ear cress).